A 187-amino-acid polypeptide reads, in one-letter code: Protein Flattop (187 aa).

Residues 97–187 (THSGHGIHTH…TPQLEREEPQ (91 aa)) form a disordered region. Positions 122 to 131 (EGDQTCNAPT) are enriched in polar residues. A compositionally biased stretch (basic and acidic residues) spans 169–187 (KRREQSLEETPQLEREEPQ).

The protein belongs to the Flattop family.

It localises to the cytoplasm. The protein localises to the cytoskeleton. It is found in the cilium basal body. The protein resides in the cell projection. Its subcellular location is the cilium. It localises to the apical cell membrane. The protein localises to the cilium axoneme. Its function is as follows. Microtubule inner protein (MIP) part of the dynein-decorated doublet microtubules (DMTs) in cilia axoneme. Acts as a regulator of cilium basal body docking and positioning in mono- and multiciliated cells. Regulates basal body docking and cilia formation in multiciliated lung cells. Regulates kinocilium positioning and stereocilia bundle morphogenesis in the inner ear. This Salmo salar (Atlantic salmon) protein is Protein Flattop.